We begin with the raw amino-acid sequence, 392 residues long: Phosphoglycerate kinase (392 aa).

Substrate-binding positions include 21-23 (DMN), Arg36, 59-62 (HLGR), Arg114, and Arg147. Residues Lys198, Glu320, and 346–349 (GGDT) contribute to the ATP site.

It belongs to the phosphoglycerate kinase family. Monomer.

It localises to the cytoplasm. The enzyme catalyses (2R)-3-phosphoglycerate + ATP = (2R)-3-phospho-glyceroyl phosphate + ADP. It functions in the pathway carbohydrate degradation; glycolysis; pyruvate from D-glyceraldehyde 3-phosphate: step 2/5. The chain is Phosphoglycerate kinase from Neisseria meningitidis serogroup C / serotype 2a (strain ATCC 700532 / DSM 15464 / FAM18).